Consider the following 287-residue polypeptide: Ribonuclease Z (287 aa).

His-64, His-66, Asp-68, His-69, His-124, Asp-191, and His-250 together coordinate Zn(2+). Catalysis depends on Asp-68, which acts as the Proton acceptor.

This sequence belongs to the RNase Z family. As to quaternary structure, homodimer. The cofactor is Zn(2+).

The enzyme catalyses Endonucleolytic cleavage of RNA, removing extra 3' nucleotides from tRNA precursor, generating 3' termini of tRNAs. A 3'-hydroxy group is left at the tRNA terminus and a 5'-phosphoryl group is left at the trailer molecule.. Zinc phosphodiesterase, which displays some tRNA 3'-processing endonuclease activity. Probably involved in tRNA maturation, by removing a 3'-trailer from precursor tRNA. The polypeptide is Ribonuclease Z (Pyrobaculum arsenaticum (strain DSM 13514 / JCM 11321 / PZ6)).